We begin with the raw amino-acid sequence, 259 residues long: Phosphatidylserine decarboxylase proenzyme (259 aa).

The active-site Schiff-base intermediate with substrate; via pyruvic acid is the Ser183. Position 183 is a pyruvic acid (Ser); by autocatalysis (Ser183).

Belongs to the phosphatidylserine decarboxylase family. PSD-A subfamily. In terms of assembly, heterodimer of a large membrane-associated beta subunit and a small pyruvoyl-containing alpha subunit. Pyruvate serves as cofactor. In terms of processing, is synthesized initially as an inactive proenzyme. Formation of the active enzyme involves a self-maturation process in which the active site pyruvoyl group is generated from an internal serine residue via an autocatalytic post-translational modification. Two non-identical subunits are generated from the proenzyme in this reaction, and the pyruvate is formed at the N-terminus of the alpha chain, which is derived from the carboxyl end of the proenzyme. The post-translation cleavage follows an unusual pathway, termed non-hydrolytic serinolysis, in which the side chain hydroxyl group of the serine supplies its oxygen atom to form the C-terminus of the beta chain, while the remainder of the serine residue undergoes an oxidative deamination to produce ammonia and the pyruvoyl prosthetic group on the alpha chain.

It localises to the cell membrane. The catalysed reaction is a 1,2-diacyl-sn-glycero-3-phospho-L-serine + H(+) = a 1,2-diacyl-sn-glycero-3-phosphoethanolamine + CO2. It functions in the pathway phospholipid metabolism; phosphatidylethanolamine biosynthesis; phosphatidylethanolamine from CDP-diacylglycerol: step 2/2. Functionally, catalyzes the formation of phosphatidylethanolamine (PtdEtn) from phosphatidylserine (PtdSer). This Neisseria gonorrhoeae (strain ATCC 700825 / FA 1090) protein is Phosphatidylserine decarboxylase proenzyme.